The sequence spans 129 residues: Photosystem II extrinsic protein V (129 aa).

Heme c is bound by residues C35, C38, H39, and H90.

Belongs to the cytochrome c family. PsbV subfamily. As to quaternary structure, PSII is composed of 1 copy each of membrane proteins PsbA, PsbB, PsbC, PsbD, PsbE, PsbF, PsbH, PsbI, PsbJ, PsbK, PsbL, PsbM, PsbT, PsbX, PsbY, PsbZ, Psb30/Ycf12, peripheral proteins PsbO, CyanoQ (PsbQ), PsbU, PsbV and a large number of cofactors. It forms dimeric complexes. Homodimer in crystal structure. Heme c is required as a cofactor.

It localises to the cellular thylakoid membrane. Functionally, one of the extrinsic, lumenal subunits of photosystem II (PSII). PSII is a light-driven water plastoquinone oxidoreductase, using light energy to abstract electrons from H(2)O, generating a proton gradient subsequently used for ATP formation. The extrinsic proteins stabilize the structure of photosystem II oxygen-evolving complex (OEC), the ion environment of oxygen evolution and protect the OEC against heat-induced inactivation. Low-potential cytochrome c that plays a role in the OEC of PSII. The sequence is that of Photosystem II extrinsic protein V from Limnospira maxima (Arthrospira maxima).